We begin with the raw amino-acid sequence, 424 residues long: Inhibin beta A chain (424 aa).

A signal peptide spans 1-20; sequence MPLLWLRGFLLASCWIIVRS. Positions 21 to 308 are excised as a propeptide; that stretch reads SPTPGSGGHS…EEHPHRRRRR (288 aa). A glycan (N-linked (GlcNAc...) asparagine) is linked at asparagine 165. Disordered stretches follow at residues 178–197 and 259–306; these read QQRR…DVGF and KKKK…HRRR. The segment covering 188-197 has biased composition (acidic residues); sequence AGEEAEDVGF. Basic and acidic residues predominate over residues 263–275; it reads KEEEAEGRKRDGE. Cystine bridges form between cysteine 312–cysteine 320, cysteine 319–cysteine 389, cysteine 348–cysteine 421, and cysteine 352–cysteine 423.

Belongs to the TGF-beta family. In terms of assembly, dimeric, linked by one or more disulfide bonds. Inhibin A is a dimer of alpha/INHA and beta-A/INHBA. Activin A is a homodimer of beta-A/INHBA. Activin AB is a dimer of beta-A/INHBA and beta-B/INHBB. Interacts with FST and FSTL3; these interactions prevent activin A interaction to its type II receptor. Activin A interacts with ACVR2A. Activin A interacts with BMPR2. Inhibin A interacts with ACVR1; this interaction creates a non-signaling complex (NSC) that inhibits ACVR1-mediated BMP signaling. Inhibin A interacts with ACVR2A.

Its subcellular location is the secreted. Its function is as follows. Inhibins/activins are involved in regulating a number of diverse functions such as hypothalamic and pituitary hormone secretion, gonadal hormone secretion, germ cell development and maturation, erythroid differentiation, insulin secretion, nerve cell survival, embryonic axial development or bone growth, depending on their subunit composition. Activin A is a homodimer of INHBA that plays a role in several essential biological processes including embryonic development, stem cell maintenance and differentiation, haematopoiesis, cell proliferation and tissue fibrosis. Signals through type I (such as ACVR1B or ACVR1C) and type II receptors (such as ACVR2A, ACVR2B or BMPR2) which, upon ligand binding, phosphorylate SMAD2 and SMAD3 intracellular signaling mediators that form a complex with SMAD4, translocate to the nucleus and modulate gene expression. Can also activate alternative non-canonical intracellular signaling pathways including the p38 MAPK, extracellular signal-regulated kinases 1/2 (ERK1/2) and c-Jun N-terminal kinases (JNKs) to modulate cell migration and differentiation. Alternatively, promotes osteoblastic differentiation via ACVRL1-SMAD1/5/9 pathway. In addition, can engage the type I receptor ACVR1 to form an ACVR1-activin A-type II receptor non-signaling complex (NSC) that renders receptors unavailable for engagement with BMPs, hence resulting in an apparent inhibition of ACVR1-mediated BMP signaling. Functionally, inhibin A is a dimer of alpha/INHA and beta-A/INHBA that functions as a feedback regulator in the hypothalamic-pituitary-gonadal (HPG) axis. Inhibits the secretion of FSH from the anterior pituitary gland by acting on pituitary gonadotrope cells. Antagonizes activin A by binding to the proteoglycan, betaglycan, and forming a stable complex with and, thereby, sequestering type II activin receptors while excluding type I receptor. This Sus scrofa (Pig) protein is Inhibin beta A chain (INHBA).